Here is a 129-residue protein sequence, read N- to C-terminus: MARGSLRRLLRLLVLGLWLALLRSVAGEQAPGTAPCSRGSSWSADLDKCMDCASCRARPHSDFCLGCAAAPPAPFRLLWPILGGALSLTFVLGLLSGFLVWRRCRRREKFTTPIEETGGEGCPAVALIQ.

The first 27 residues, 1–27, serve as a signal peptide directing secretion; sequence MARGSLRRLLRLLVLGLWLALLRSVAG. Residues 28-80 lie on the Extracellular side of the membrane; the sequence is EQAPGTAPCSRGSSWSADLDKCMDCASCRARPHSDFCLGCAAAPPAPFRLLWP. Cystine bridges form between Cys36–Cys49, Cys52–Cys67, and Cys55–Cys64. A TNFR-Cys; atypical repeat occupies 36 to 67; sequence CSRGSSWSADLDKCMDCASCRARPHSDFCLGC. The chain crosses the membrane as a helical span at residues 81 to 101; that stretch reads ILGGALSLTFVLGLLSGFLVW. Residues 102-129 lie on the Cytoplasmic side of the membrane; the sequence is RRCRRREKFTTPIEETGGEGCPAVALIQ.

As to quaternary structure, associates with TRAF1 and TRAF2, and probably also with TRAF3. In terms of tissue distribution, highly expressed in heart, placenta and kidney. Intermediate expression in lung, skeletal muscle and pancreas.

It is found in the membrane. In terms of biological role, receptor for TNFSF12/TWEAK. Weak inducer of apoptosis in some cell types. Promotes angiogenesis and the proliferation of endothelial cells. May modulate cellular adhesion to matrix proteins. The sequence is that of Tumor necrosis factor receptor superfamily member 12A (TNFRSF12A) from Homo sapiens (Human).